Reading from the N-terminus, the 91-residue chain is DNA/RNA-binding protein Alba (91 aa).

This sequence belongs to the histone-like Alba family.

It localises to the cytoplasm. It is found in the chromosome. In terms of biological role, binds double-stranded DNA tightly but without sequence specificity. Involved in DNA compaction. This is DNA/RNA-binding protein Alba from Methanoculleus marisnigri (strain ATCC 35101 / DSM 1498 / JR1).